The sequence spans 298 residues: ATP phosphoribosyltransferase (298 aa).

It belongs to the ATP phosphoribosyltransferase family. Long subfamily. Mg(2+) serves as cofactor.

Its subcellular location is the cytoplasm. It carries out the reaction 1-(5-phospho-beta-D-ribosyl)-ATP + diphosphate = 5-phospho-alpha-D-ribose 1-diphosphate + ATP. It functions in the pathway amino-acid biosynthesis; L-histidine biosynthesis; L-histidine from 5-phospho-alpha-D-ribose 1-diphosphate: step 1/9. Its activity is regulated as follows. Feedback inhibited by histidine. Catalyzes the condensation of ATP and 5-phosphoribose 1-diphosphate to form N'-(5'-phosphoribosyl)-ATP (PR-ATP). Has a crucial role in the pathway because the rate of histidine biosynthesis seems to be controlled primarily by regulation of HisG enzymatic activity. The protein is ATP phosphoribosyltransferase of Aliivibrio salmonicida (strain LFI1238) (Vibrio salmonicida (strain LFI1238)).